Here is a 295-residue protein sequence, read N- to C-terminus: Ent-pimara-9(11),15-diene synthase (295 aa).

Belongs to the terpene synthase family. In terms of assembly, monomer. Requires a divalent metal cation as cofactor.

It catalyses the reaction ent-copalyl diphosphate = ent-pimara-9(11),15-diene + diphosphate. It participates in antibiotic biosynthesis. Its function is as follows. Involved in viguiepinol biosynthesis. Catalyzes the conversion of copalyl diphosphate (ent-CDP) into pimara-9(11),15-diene (PMD). The chain is Ent-pimara-9(11),15-diene synthase from Streptomyces sp. (strain KO-3988).